We begin with the raw amino-acid sequence, 277 residues long: Large ribosomal subunit protein uL2 (277 aa).

Disordered stretches follow at residues 24-55 and 221-277; these read ITTS…RHHG and RGSV…RKKK.

This sequence belongs to the universal ribosomal protein uL2 family. As to quaternary structure, part of the 50S ribosomal subunit. Forms a bridge to the 30S subunit in the 70S ribosome.

One of the primary rRNA binding proteins. Required for association of the 30S and 50S subunits to form the 70S ribosome, for tRNA binding and peptide bond formation. It has been suggested to have peptidyltransferase activity; this is somewhat controversial. Makes several contacts with the 16S rRNA in the 70S ribosome. This Listeria innocua serovar 6a (strain ATCC BAA-680 / CLIP 11262) protein is Large ribosomal subunit protein uL2.